Reading from the N-terminus, the 203-residue chain is uncharacterized protein (203 aa).

3 consecutive transmembrane segments (helical) span residues 60–80 (IIDM…FFLY), 114–134 (WFQL…YFCT), and 157–177 (LQLG…ALIL). 192-199 (GAMSEGKT) provides a ligand contact to ATP.

It is found in the membrane. This is an uncharacterized protein from Saccharomyces cerevisiae (strain ATCC 204508 / S288c) (Baker's yeast).